Reading from the N-terminus, the 188-residue chain is Movement protein (188 aa).

The protein belongs to the tombusvirus/aureusvirus movement protein p22 family. In terms of assembly, interacts with host protein HFI22. Post-translationally, phosphorylated.

It is found in the host membrane. Transports viral genome to neighboring plant cells directly through plasmosdesmata, without any budding. The movement protein allows efficient cell to cell propagation, by bypassing the host cell wall barrier. The chain is Movement protein from Capsicum annuum (Capsicum pepper).